Consider the following 171-residue polypeptide: Crossover junction endodeoxyribonuclease RuvC (171 aa).

Active-site residues include Asp7, Glu66, and Asp138. Positions 7, 66, and 138 each coordinate Mg(2+).

Belongs to the RuvC family. In terms of assembly, homodimer which binds Holliday junction (HJ) DNA. The HJ becomes 2-fold symmetrical on binding to RuvC with unstacked arms; it has a different conformation from HJ DNA in complex with RuvA. In the full resolvosome a probable DNA-RuvA(4)-RuvB(12)-RuvC(2) complex forms which resolves the HJ. It depends on Mg(2+) as a cofactor.

It is found in the cytoplasm. It carries out the reaction Endonucleolytic cleavage at a junction such as a reciprocal single-stranded crossover between two homologous DNA duplexes (Holliday junction).. Its function is as follows. The RuvA-RuvB-RuvC complex processes Holliday junction (HJ) DNA during genetic recombination and DNA repair. Endonuclease that resolves HJ intermediates. Cleaves cruciform DNA by making single-stranded nicks across the HJ at symmetrical positions within the homologous arms, yielding a 5'-phosphate and a 3'-hydroxyl group; requires a central core of homology in the junction. The consensus cleavage sequence is 5'-(A/T)TT(C/G)-3'. Cleavage occurs on the 3'-side of the TT dinucleotide at the point of strand exchange. HJ branch migration catalyzed by RuvA-RuvB allows RuvC to scan DNA until it finds its consensus sequence, where it cleaves and resolves the cruciform DNA. The sequence is that of Crossover junction endodeoxyribonuclease RuvC from Francisella tularensis subsp. mediasiatica (strain FSC147).